The chain runs to 561 residues: Zinc finger protein 394 (561 aa).

Serine 12 is modified (phosphoserine). Lysine 40 is covalently cross-linked (Glycyl lysine isopeptide (Lys-Gly) (interchain with G-Cter in SUMO2)). The interval 43 to 62 (EDSLGSWEPSYPAASPDPET) is disordered. In terms of domain architecture, SCAN box spans 64–146 (RLHFRQLRYQ…AVVRALQRAL (83 aa)). A KRAB domain is found at 155–230 (VTFEDMAVSL…LQEAFQGKRP (76 aa)). Glycyl lysine isopeptide (Lys-Gly) (interchain with G-Cter in SUMO2) cross-links involve residues lysine 203 and lysine 228. Positions 238 to 247 (THEDRVEKQS) are enriched in basic and acidic residues. The segment at 238–283 (THEDRVEKQSGDPLPLKLENSPEAEGFNSISDVNKNGSIEGEDSKN) is disordered. Residue lysine 254 forms a Glycyl lysine isopeptide (Lys-Gly) (interchain with G-Cter in SUMO2) linkage. A compositionally biased stretch (polar residues) spans 265–274 (NSISDVNKNG). A Glycyl lysine isopeptide (Lys-Gly) (interchain with G-Cter in SUMO2) cross-link involves residue lysine 282. C2H2-type zinc fingers lie at residues 358-380 (YKCG…QRIH), 386-408 (YGCQ…QRTH), 414-436 (YTCL…QSTH), 442-463 (FKCE…QRLH), 469-491 (YKCE…HRIH), 497-519 (YGCS…QRIH), and 525-547 (YKCL…QRIH). Lysine 443 participates in a covalent cross-link: Glycyl lysine isopeptide (Lys-Gly) (interchain with G-Cter in SUMO2).

The protein belongs to the krueppel C2H2-type zinc-finger protein family.

It localises to the nucleus. In terms of biological role, may be involved in transcriptional regulation. This is Zinc finger protein 394 (ZNF394) from Pan paniscus (Pygmy chimpanzee).